Consider the following 254-residue polypeptide: Glucosamine-6-phosphate deaminase (254 aa).

Asp-63 functions as the Proton acceptor; for enolization step in the catalytic mechanism. Asn-129 functions as the For ring-opening step in the catalytic mechanism. His-131 serves as the catalytic Proton acceptor; for ring-opening step. Glu-136 functions as the For ring-opening step in the catalytic mechanism.

This sequence belongs to the glucosamine/galactosamine-6-phosphate isomerase family. NagB subfamily.

The catalysed reaction is alpha-D-glucosamine 6-phosphate + H2O = beta-D-fructose 6-phosphate + NH4(+). The protein operates within amino-sugar metabolism; N-acetylneuraminate degradation; D-fructose 6-phosphate from N-acetylneuraminate: step 5/5. Functionally, catalyzes the reversible isomerization-deamination of glucosamine 6-phosphate (GlcN6P) to form fructose 6-phosphate (Fru6P) and ammonium ion. This chain is Glucosamine-6-phosphate deaminase, found in Exiguobacterium sp. (strain ATCC BAA-1283 / AT1b).